The following is a 204-amino-acid chain: Tat proofreading chaperone DmsD (204 aa).

The protein belongs to the TorD/DmsD family. DmsD subfamily. In terms of assembly, monomer in solution.

In terms of biological role, required for biogenesis/assembly of DMSO reductase, but not for the interaction of the DmsA signal peptide with the Tat system. May be part of a chaperone cascade complex that facilitates a folding-maturation pathway for the substrate protein. This Salmonella typhimurium (strain LT2 / SGSC1412 / ATCC 700720) protein is Tat proofreading chaperone DmsD.